A 502-amino-acid chain; its full sequence is 4,4'-diapophytoene desaturase (4,4'-diaponeurosporene-forming) (502 aa).

5 to 17 (VIGAGVTGLAAAA) contributes to the FAD binding site.

The protein belongs to the carotenoid/retinoid oxidoreductase family. CrtN subfamily.

It carries out the reaction 15-cis-4,4'-diapophytoene + 3 FAD + 3 H(+) = all-trans-4,4'-diaponeurosporene + 3 FADH2. The protein operates within carotenoid biosynthesis; staphyloxanthin biosynthesis; staphyloxanthin from farnesyl diphosphate: step 2/5. Functionally, involved in the biosynthesis of the yellow-orange carotenoid staphyloxanthin, which plays a role in the virulence via its protective function against oxidative stress. Catalyzes three successive dehydrogenation reactions that lead to the introduction of three double bonds into 4,4'-diapophytoene (dehydrosqualene), with 4,4'-diapophytofluene and 4,4'-diapo-zeta-carotene as intermediates, and 4,4'-diaponeurosporene (the major deep-yellow pigment in staphylococci strains) as the end product. This Staphylococcus aureus (strain bovine RF122 / ET3-1) protein is 4,4'-diapophytoene desaturase (4,4'-diaponeurosporene-forming).